Reading from the N-terminus, the 151-residue chain is Nucleoside diphosphate kinase (151 aa).

Residues lysine 9, phenylalanine 57, arginine 86, threonine 92, arginine 103, and asparagine 113 each coordinate ATP. Histidine 116 (pros-phosphohistidine intermediate) is an active-site residue.

This sequence belongs to the NDK family. As to quaternary structure, homotetramer. It depends on Mg(2+) as a cofactor.

The protein localises to the cytoplasm. It carries out the reaction a 2'-deoxyribonucleoside 5'-diphosphate + ATP = a 2'-deoxyribonucleoside 5'-triphosphate + ADP. The enzyme catalyses a ribonucleoside 5'-diphosphate + ATP = a ribonucleoside 5'-triphosphate + ADP. Its function is as follows. Major role in the synthesis of nucleoside triphosphates other than ATP. The ATP gamma phosphate is transferred to the NDP beta phosphate via a ping-pong mechanism, using a phosphorylated active-site intermediate. The chain is Nucleoside diphosphate kinase from Chloroflexus aggregans (strain MD-66 / DSM 9485).